The following is a 710-amino-acid chain: Amyloid beta precursor protein binding family B member 1 (710 aa).

Residue S135 is modified to Phosphoserine. Disordered stretches follow at residues 143-256 and 276-300; these read EQGP…SDLP and GTTQWEPPGRASPSQGSSPQEESQL. Residues 145-173 are compositionally biased toward acidic residues; the sequence is GPDEGEEKAAGEAEEDDEDEEEEEEEEDL. At K204 the chain carries N6-acetyllysine. Residues 223-234 show a composition bias toward polar residues; that stretch reads SWATLSQGSPSY. The WW domain maps to 253 to 285; sequence SDLPAGWMRVQDTSGTYYWHIPTGTTQWEPPGR. A compositionally biased stretch (low complexity) spans 287-299; that stretch reads SPSQGSSPQEESQ. Residues 370–509 enclose the PID 1 domain; sequence FAVRSLGWVE…SKIMSERRNA (140 aa). Phosphoserine; by PKC is present on S459. S517 carries the phosphoserine modification. A PID 2 domain is found at 542 to 699; it reads KFQVYYLGNV…RRGVQSLWGS (158 aa). Y547 carries the phosphotyrosine; by ABL1 modification. Residue S610 is modified to Phosphoserine; by SGK1. K701 carries the N6-acetyllysine modification.

Component of a complex, at least composed of APBB1, RASD1/DEXRAS1 and APP. Interacts (via PID domain 2) with APP (with the intracellular domain of the amyloid-beta precursor protein). Interacts (via PID domain 2) with RASD1/DEXRAS1; impairs the transcription activation activity. Interacts (via PID domain 1) with KAT5/TIP60. Interacts (via the WW domain) with the proline-rich region of APBB1IP. Interacts with TSHZ1 and TSHZ2. Interacts (via the WW domain) with histone H2AX (when phosphorylated on 'Tyr-142') and the proline-rich region of ENAH. Interacts with MAPK8. Interacts (via PID domain 1) with TSHZ3 (via homeobox domain). Interacts with SET. Found in a trimeric complex with HDAC1 and TSHZ3; the interaction between HDAC1 and APBB1 is mediated by TSHZ3. Interacts (via WWW domain) with NEK6. Interacts (via WWW domain) with ABL1. Interacts with RNF157. Interacts with ARF6. Polyubiquitination by RNF157 leads to degradation by the proteasome. In terms of processing, phosphorylation at Ser-610 by SGK1 promotes its localization to the nucleus. Phosphorylated following nuclear translocation. Phosphorylation at Tyr-546 by ABL1 enhances transcriptional activation activity and reduces the affinity for RASD1/DEXRAS1. Post-translationally, acetylation at Lys-204 and Lys-701 by KAT5 promotes its transcription activator activity. Phosphorylated at Ser-459 by PKC upon insulin activation. In terms of tissue distribution, expressed in the brain, retinal lens and muscle cells (at protein level).

The protein localises to the cell membrane. The protein resides in the cytoplasm. It localises to the nucleus. It is found in the cell projection. Its subcellular location is the growth cone. The protein localises to the nucleus speckle. Its function is as follows. Transcription coregulator that can have both coactivator and corepressor functions. Adapter protein that forms a transcriptionally active complex with the gamma-secretase-derived amyloid precursor protein (APP) intracellular domain. Plays a central role in the response to DNA damage by translocating to the nucleus and inducing apoptosis. May act by specifically recognizing and binding histone H2AX phosphorylated on 'Tyr-142' (H2AXY142ph) at double-strand breaks (DSBs), recruiting other pro-apoptosis factors such as MAPK8/JNK1. Required for histone H4 acetylation at double-strand breaks (DSBs). Its ability to specifically bind modified histones and chromatin modifying enzymes such as KAT5/TIP60, probably explains its transcription activation activity. Functions in association with TSHZ3, SET and HDAC factors as a transcriptional repressor, that inhibits the expression of CASP4. Associates with chromatin in a region surrounding the CASP4 transcriptional start site(s). Involved in hippocampal neurite branching and neuromuscular junction formation, as a result plays a role in spatial memory functioning. Plays a role in the maintenance of lens transparency. May play a role in muscle cell strength. Acts as a molecular adapter that functions in neurite outgrowth by activating the RAC1-ARF6 axis upon insulin treatment. This chain is Amyloid beta precursor protein binding family B member 1, found in Mus musculus (Mouse).